Reading from the N-terminus, the 629-residue chain is 1-deoxy-D-xylulose-5-phosphate synthase (629 aa).

Thiamine diphosphate contacts are provided by residues His78 and 119–121 (AHS). Asp150 contacts Mg(2+). Thiamine diphosphate-binding positions include 151-152 (GA), Asn179, Tyr286, and Glu368. Asn179 contributes to the Mg(2+) binding site.

It belongs to the transketolase family. DXPS subfamily. In terms of assembly, homodimer. The cofactor is Mg(2+). Requires thiamine diphosphate as cofactor.

The catalysed reaction is D-glyceraldehyde 3-phosphate + pyruvate + H(+) = 1-deoxy-D-xylulose 5-phosphate + CO2. It participates in metabolic intermediate biosynthesis; 1-deoxy-D-xylulose 5-phosphate biosynthesis; 1-deoxy-D-xylulose 5-phosphate from D-glyceraldehyde 3-phosphate and pyruvate: step 1/1. Catalyzes the acyloin condensation reaction between C atoms 2 and 3 of pyruvate and glyceraldehyde 3-phosphate to yield 1-deoxy-D-xylulose-5-phosphate (DXP). This chain is 1-deoxy-D-xylulose-5-phosphate synthase, found in Acidovorax ebreus (strain TPSY) (Diaphorobacter sp. (strain TPSY)).